The chain runs to 130 residues: DNA-directed RNA polymerase subunit omega (130 aa).

The segment at 109–130 (EEELLKGLEGLAPPEEQPEEDE) is disordered.

The protein belongs to the RNA polymerase subunit omega family. As to quaternary structure, the RNAP catalytic core consists of 2 alpha, 1 beta, 1 beta' and 1 omega subunit. When a sigma factor is associated with the core the holoenzyme is formed, which can initiate transcription.

It catalyses the reaction RNA(n) + a ribonucleoside 5'-triphosphate = RNA(n+1) + diphosphate. Functionally, promotes RNA polymerase assembly. Latches the N- and C-terminal regions of the beta' subunit thereby facilitating its interaction with the beta and alpha subunits. The polypeptide is DNA-directed RNA polymerase subunit omega (Rhodopseudomonas palustris (strain BisB5)).